The sequence spans 354 residues: COP9 signalosome complex subunit 5 (354 aa).

Residues 56-193 form the MPN domain; that stretch reads VLVSSIALVK…IGAFRTYPKD (138 aa). The Zn(2+) site is built by H139, H141, and D152. The JAMM motif signature appears at 139–152; the sequence is HSHPGYGCWLSGID. Residues 193 to 212 are disordered; the sequence is DYKPPKKATKQNQDQSVPLS.

Belongs to the peptidase M67A family. CSN5 subfamily. Component of the COP9 signalosome (CSN) complex.

Its subcellular location is the cytoplasm. The protein resides in the nucleus. In terms of biological role, catalytic Component of the COP9 signalosome (CSN) complex that acts as an regulator of the ubiquitin (Ubl) conjugation pathway by mediating the deneddylation of the cullin subunit of SCF-type E3 ubiquitin-protein ligase complexes. The chain is COP9 signalosome complex subunit 5 (RRI1) from Yarrowia lipolytica (strain CLIB 122 / E 150) (Yeast).